Reading from the N-terminus, the 99-residue chain is Large ribosomal subunit protein uL23 (99 aa).

Belongs to the universal ribosomal protein uL23 family. Part of the 50S ribosomal subunit. Contacts protein L29, and trigger factor when it is bound to the ribosome.

One of the early assembly proteins it binds 23S rRNA. One of the proteins that surrounds the polypeptide exit tunnel on the outside of the ribosome. Forms the main docking site for trigger factor binding to the ribosome. This chain is Large ribosomal subunit protein uL23, found in Rhodopseudomonas palustris (strain BisB18).